We begin with the raw amino-acid sequence, 357 residues long: tRNA N6-adenosine threonylcarbamoyltransferase (357 aa).

Fe cation-binding residues include His-120 and His-124. Residues 143–147 (LVSGG), Asp-176, Gly-189, and Asn-289 each bind substrate. A Fe cation-binding site is contributed by Asp-317.

It belongs to the KAE1 / TsaD family. It depends on Fe(2+) as a cofactor.

Its subcellular location is the cytoplasm. It catalyses the reaction L-threonylcarbamoyladenylate + adenosine(37) in tRNA = N(6)-L-threonylcarbamoyladenosine(37) in tRNA + AMP + H(+). In terms of biological role, required for the formation of a threonylcarbamoyl group on adenosine at position 37 (t(6)A37) in tRNAs that read codons beginning with adenine. Is involved in the transfer of the threonylcarbamoyl moiety of threonylcarbamoyl-AMP (TC-AMP) to the N6 group of A37, together with TsaE and TsaB. TsaD likely plays a direct catalytic role in this reaction. The protein is tRNA N6-adenosine threonylcarbamoyltransferase of Polynucleobacter asymbioticus (strain DSM 18221 / CIP 109841 / QLW-P1DMWA-1) (Polynucleobacter necessarius subsp. asymbioticus).